The sequence spans 248 residues: 3-deoxy-manno-octulosonate cytidylyltransferase (248 aa).

The protein belongs to the KdsB family.

Its subcellular location is the cytoplasm. It carries out the reaction 3-deoxy-alpha-D-manno-oct-2-ulosonate + CTP = CMP-3-deoxy-beta-D-manno-octulosonate + diphosphate. The protein operates within nucleotide-sugar biosynthesis; CMP-3-deoxy-D-manno-octulosonate biosynthesis; CMP-3-deoxy-D-manno-octulosonate from 3-deoxy-D-manno-octulosonate and CTP: step 1/1. Its pathway is bacterial outer membrane biogenesis; lipopolysaccharide biosynthesis. Activates KDO (a required 8-carbon sugar) for incorporation into bacterial lipopolysaccharide in Gram-negative bacteria. The sequence is that of 3-deoxy-manno-octulosonate cytidylyltransferase from Klebsiella pneumoniae subsp. pneumoniae (strain ATCC 700721 / MGH 78578).